The primary structure comprises 68 residues: Urocalcin (68 aa).

A signal peptide spans 1–27 (MKASTLVVIFIVIFITISSFSIHDVQA). Residues 28–35 (SGVEKREQ) constitute a propeptide that is removed on maturation. Intrachain disulfides connect Cys38–Cys52, Cys45–Cys56, and Cys51–Cys67. Residues 57–59 (KRR) form an essential for stimulation of [3H]ryanodine binding to RYR1 region.

It belongs to the scorpion calcin family. As to expression, expressed by the venom gland.

It localises to the secreted. This toxin only weakly stabilizes ryanodine receptor 1 (RyR1) opening in a long-lasting subconductance state (55% of the full conductance state obtained only at high concentrations (1 uM)). In addition, it has been shown to dose-dependently stimulate ryanodine binding to RyR1 with the lowest activity of all calcins (EC(50)=376 nM). It also augments the bell-shaped calcium-[3H]ryanodine binding curve that is maximal at about 10 uM calcium concentration. It binds a different site as ryanodine. It acts synergistically with caffeine. In contrast to other calcins, it does not trigger calcium release from sarcoplasmic vesicles even at high concentration (1 uM). In vivo, intracerebroventricular injection into mice induces neurotoxic symptoms, followed by death. This chain is Urocalcin, found in Urodacus yaschenkoi (Inland robust scorpion).